The chain runs to 126 residues: MMTPTIPVALFDRLLVEGISPHELVRRKLMCLFNSCSVPGGETLPPLLTRGMPEWHEVNVGDKRVLNWFCRELRAAILRYEPSINMLKVSVKDAHHQTLALSLEAMLQDESEPLRLEIAYSNGRWR.

It belongs to the GpW/Gp25 family. IraD subfamily. As to quaternary structure, interacts with RssB.

It localises to the cytoplasm. Functionally, inhibits RpoS proteolysis by regulating RssB activity, thereby increasing the stability of the sigma stress factor RpoS during oxidative stress. Its effect on RpoS stability is due to its interaction with RssB, which probably blocks the interaction of RssB with RpoS, and the consequent delivery of the RssB-RpoS complex to the ClpXP protein degradation pathway. The protein is Anti-adapter protein IraD of Salmonella choleraesuis (strain SC-B67).